The primary structure comprises 214 residues: Small ribosomal subunit protein uS2 (214 aa).

It belongs to the universal ribosomal protein uS2 family.

This chain is Small ribosomal subunit protein uS2, found in Methanococcoides burtonii (strain DSM 6242 / NBRC 107633 / OCM 468 / ACE-M).